The chain runs to 66 residues: Large ribosomal subunit protein bL33c (66 aa).

The protein belongs to the bacterial ribosomal protein bL33 family.

Its subcellular location is the plastid. It localises to the chloroplast. The chain is Large ribosomal subunit protein bL33c from Solanum bulbocastanum (Wild potato).